Here is a 258-residue protein sequence, read N- to C-terminus: Phosphoribosylaminoimidazole-succinocarboxamide synthase (258 aa).

It belongs to the SAICAR synthetase family.

It carries out the reaction 5-amino-1-(5-phospho-D-ribosyl)imidazole-4-carboxylate + L-aspartate + ATP = (2S)-2-[5-amino-1-(5-phospho-beta-D-ribosyl)imidazole-4-carboxamido]succinate + ADP + phosphate + 2 H(+). It functions in the pathway purine metabolism; IMP biosynthesis via de novo pathway; 5-amino-1-(5-phospho-D-ribosyl)imidazole-4-carboxamide from 5-amino-1-(5-phospho-D-ribosyl)imidazole-4-carboxylate: step 1/2. The sequence is that of Phosphoribosylaminoimidazole-succinocarboxamide synthase from Maricaulis maris (strain MCS10) (Caulobacter maris).